The following is a 309-amino-acid chain: UDP-URONIC ACID TRANSPORTER 1 (309 aa).

The next 10 helical transmembrane spans lie at 9 to 29 (TLFISTLIISWYSSNIGVLLL), 43 to 63 (IFLTMCHMSACAILSYISIVF), 78 to 98 (FLKVATLSIVFCASVVGGNIS), 104 to 124 (VSFNQAVGATTPFFTALFAYL), 131 to 151 (AWVTYGALVPVVAGVVIASGG), 152 to 172 (EPGFHWFGFIMCISATAARAF), 193 to 213 (LMLYMSPIAVIALLPVTLFME), 231 to 251 (WILLLVNSVMAYSANLLNFLV), 256 to 278 (SALTLQVLGNAKGAVAVVISILI), and 283 to 302 (VTVMGIGGYSITVLGVVAYG).

The protein belongs to the TPT transporter family. TPT (TC 2.A.7.9) subfamily. In terms of tissue distribution, ubiquitous.

It is found in the golgi apparatus membrane. Functionally, UDP-glucuronic acid transporter that modulates the polysaccharide composition of seed mucilage. Transports UDP-glucuronic acid (UDP-GlcA) and UDP-galacturonic acid (UDP-GalA) in vitro. The protein is UDP-URONIC ACID TRANSPORTER 1 of Arabidopsis thaliana (Mouse-ear cress).